A 397-amino-acid chain; its full sequence is Elongation factor Tu (397 aa).

The 198-residue stretch at 10 to 207 (KPHVNIGTIG…VLDEYVKEPV (198 aa)) folds into the tr-type G domain. A G1 region spans residues 19–26 (GHIDHGKT). Residue 19–26 (GHIDHGKT) coordinates GTP. Threonine 26 lines the Mg(2+) pocket. A G2 region spans residues 60–64 (GITIS). Positions 81 to 84 (DCPG) are G3. Residues 81–85 (DCPGH) and 136–139 (NKCD) each bind GTP. Residues 136-139 (NKCD) are G4. The interval 174-176 (SAL) is G5.

The protein belongs to the TRAFAC class translation factor GTPase superfamily. Classic translation factor GTPase family. EF-Tu/EF-1A subfamily. As to quaternary structure, monomer.

The protein resides in the cytoplasm. The catalysed reaction is GTP + H2O = GDP + phosphate + H(+). GTP hydrolase that promotes the GTP-dependent binding of aminoacyl-tRNA to the A-site of ribosomes during protein biosynthesis. The chain is Elongation factor Tu from Desulforapulum autotrophicum (strain ATCC 43914 / DSM 3382 / VKM B-1955 / HRM2) (Desulfobacterium autotrophicum).